Here is a 658-residue protein sequence, read N- to C-terminus: Translation factor GUF1, mitochondrial (658 aa).

A mitochondrion-targeting transit peptide spans 1 to 40 (MRGCLQTVRWLTSAWQRPPSYPPLSRAAPCRFFNVSIPRN). Positions 60 to 240 (DRFRNFCIVA…TVVEQIPAPV (181 aa)) constitute a tr-type G domain. Residues 69-76 (AHVDHGKS), 133-137 (DTPGH), and 187-190 (NKVD) each bind GTP.

The protein belongs to the TRAFAC class translation factor GTPase superfamily. Classic translation factor GTPase family. LepA subfamily.

Its subcellular location is the mitochondrion inner membrane. It catalyses the reaction GTP + H2O = GDP + phosphate + H(+). Functionally, promotes mitochondrial protein synthesis. May act as a fidelity factor of the translation reaction, by catalyzing a one-codon backward translocation of tRNAs on improperly translocated ribosomes. Binds to mitochondrial ribosomes in a GTP-dependent manner. The sequence is that of Translation factor GUF1, mitochondrial from Paracoccidioides brasiliensis (strain Pb18).